We begin with the raw amino-acid sequence, 334 residues long: MQSNTFLTPRIIDVQNISPLHARITMEPFERGYGHTLGNALRRILLSSMPGFAPTEVQISGVVHEYSALDGVQEDVVDILLNLKGIVLKLHNRTEALLTLSKKGEGTVTAGDIEGGHDVEIINPDHVVAHLTSGGKLDMQIKVEMGRGYVPGTVRQLAHESRAIGSILLDASFSPVRRVSYAVESARVEQRTDLDKLVMDIETNGVVDPEEAIRYAAKVLVEQLSVFADLKGTPLPVEQPKLPQIDPVLLRPVDDLELTVRSANCLKAENIYYIGDLIQRTETELLKTPNLGRKSLNEIKEVLASRGLTLGMKLESWPPSNLDKGKKDTSHAAP.

An alpha N-terminal domain (alpha-NTD) region spans residues 1–231; sequence MQSNTFLTPR…EQLSVFADLK (231 aa). The tract at residues 245–334 is alpha C-terminal domain (alpha-CTD); sequence IDPVLLRPVD…GKKDTSHAAP (90 aa).

It belongs to the RNA polymerase alpha chain family. Homodimer. The RNAP catalytic core consists of 2 alpha, 1 beta, 1 beta' and 1 omega subunit. When a sigma factor is associated with the core the holoenzyme is formed, which can initiate transcription.

It carries out the reaction RNA(n) + a ribonucleoside 5'-triphosphate = RNA(n+1) + diphosphate. Its function is as follows. DNA-dependent RNA polymerase catalyzes the transcription of DNA into RNA using the four ribonucleoside triphosphates as substrates. The chain is DNA-directed RNA polymerase subunit alpha from Nitrosospira multiformis (strain ATCC 25196 / NCIMB 11849 / C 71).